Consider the following 314-residue polypeptide: Curved DNA-binding protein (314 aa).

Residues 5-69 form the J domain; it reads DYYKILDVEP…EKRAEYDELR (65 aa). The segment at 73–92 is disordered; that stretch reads RQGRPFQTPPGWQSRAGAGA.

The protein resides in the cytoplasm. The protein localises to the nucleoid. DNA-binding protein that preferentially recognizes a curved DNA sequence. It is probably a functional analog of DnaJ; displays overlapping activities with DnaJ, but functions under different conditions, probably acting as a molecular chaperone in an adaptive response to environmental stresses other than heat shock. Lacks autonomous chaperone activity; binds native substrates and targets them for recognition by DnaK. Its activity is inhibited by the binding of CbpM. The protein is Curved DNA-binding protein of Pseudomonas syringae pv. tomato (strain ATCC BAA-871 / DC3000).